Consider the following 273-residue polypeptide: Vitamin B12-binding protein (273 aa).

Residues Met1–Ala18 form the signal peptide. The region spanning Arg23–Arg273 is the Fe/B12 periplasmic-binding domain. An intrachain disulfide couples Cys183 to Cys263.

This sequence belongs to the BtuF family. As to quaternary structure, the complex is composed of two ATP-binding proteins (BtuD), two transmembrane proteins (BtuC) and a solute-binding protein (BtuF).

It localises to the periplasm. Part of the ABC transporter complex BtuCDF involved in vitamin B12 import. Binds vitamin B12 and delivers it to the periplasmic surface of BtuC. The sequence is that of Vitamin B12-binding protein from Vibrio vulnificus (strain CMCP6).